The chain runs to 56 residues: Large ribosomal subunit protein bL33 (56 aa).

The protein belongs to the bacterial ribosomal protein bL33 family.

This chain is Large ribosomal subunit protein bL33, found in Campylobacter hominis (strain ATCC BAA-381 / DSM 21671 / CCUG 45161 / LMG 19568 / NCTC 13146 / CH001A).